Here is a 172-residue protein sequence, read N- to C-terminus: Signal peptidase complex catalytic subunit SEC11 (172 aa).

Residues 1-15 are Cytoplasmic-facing; sequence MVNFGAQSIRQTLVQ. The helical; Signal-anchor for type II membrane protein transmembrane segment at 16-36 threads the bilayer; that stretch reads LLGFAAIFTSSYMFYKGLSIV. Over 37–172 the chain is Lumenal; the sequence is ANSESPLVVV…TGLLAFIQGE (136 aa). Catalysis depends on charge relay system residues serine 50, histidine 89, and aspartate 114. Residues 158–169 are C-terminal short (CTS) helix; sequence GLLGITGLLAFI.

It belongs to the peptidase S26B family. Component of the signal peptidase complex (SPC) composed of a catalytic subunit SEC11 and three accessory subunits SPC1, SPC2 and SPC3. The complex induces a local thinning of the ER membrane which is used to measure the length of the signal peptide (SP) h-region of protein substrates. This ensures the selectivity of the complex towards h-regions shorter than 18-20 amino acids. SPC associates with the translocon complex.

Its subcellular location is the endoplasmic reticulum membrane. It carries out the reaction Cleavage of hydrophobic, N-terminal signal or leader sequences from secreted and periplasmic proteins.. Catalytic component of the signal peptidase complex (SPC) which catalyzes the cleavage of N-terminal signal sequences from nascent proteins as they are translocated into the lumen of the endoplasmic reticulum. Specifically cleaves N-terminal signal peptides that contain a hydrophobic alpha-helix (h-region) shorter than 18-20 amino acids. The polypeptide is Signal peptidase complex catalytic subunit SEC11 (SEC11) (Yarrowia lipolytica (strain CLIB 122 / E 150) (Yeast)).